The primary structure comprises 219 residues: Ribosomal RNA small subunit methyltransferase Nep1 (219 aa).

S-adenosyl-L-methionine contacts are provided by residues G178, G183, and 196-201; that span reads LYKAPL.

Belongs to the class IV-like SAM-binding methyltransferase superfamily. RNA methyltransferase NEP1 family. Homodimer.

The catalysed reaction is a pseudouridine in rRNA + S-adenosyl-L-methionine = an N(1)-methylpseudouridine in rRNA + S-adenosyl-L-homocysteine + H(+). Methyltransferase involved in ribosomal biogenesis. Specifically catalyzes the N1-methylation of the pseudouridine corresponding to position 914 in M.jannaschii 16S rRNA. This is Ribosomal RNA small subunit methyltransferase Nep1 from Thermococcus onnurineus (strain NA1).